The chain runs to 79 residues: Acyl carrier protein (79 aa).

The Carrier domain maps to 2–77; it reads SEIGERVKKI…DATKFLEKNA (76 aa). Serine 37 bears the O-(pantetheine 4'-phosphoryl)serine mark.

It belongs to the acyl carrier protein (ACP) family. Post-translationally, 4'-phosphopantetheine is transferred from CoA to a specific serine of apo-ACP by AcpS. This modification is essential for activity because fatty acids are bound in thioester linkage to the sulfhydryl of the prosthetic group.

It is found in the cytoplasm. It functions in the pathway lipid metabolism; fatty acid biosynthesis. In terms of biological role, carrier of the growing fatty acid chain in fatty acid biosynthesis. This Nitrobacter winogradskyi (strain ATCC 25391 / DSM 10237 / CIP 104748 / NCIMB 11846 / Nb-255) protein is Acyl carrier protein.